The following is an 886-amino-acid chain: Microsomal triglyceride transfer protein (886 aa).

A signal peptide spans Met-1 to Ala-24. The region spanning Leu-28–Leu-662 is the Vitellogenin domain. 2 cysteine pairs are disulfide-bonded: Cys-174–Cys-194 and Cys-440–Cys-445.

Heterodimer; heterodimerizes with the protein disulfide isomerase. Interacts with apolipoprotein B.

The protein localises to the endoplasmic reticulum. Catalyzes the transport of triglyceride, cholesteryl ester, and phospholipid between phospholipid surfaces. Required for the secretion of plasma lipoproteins that contain apolipoprotein B. This Megalobrama amblycephala (Chinese blunt snout bream) protein is Microsomal triglyceride transfer protein.